The primary structure comprises 202 residues: Small ribosomal subunit protein uS4c (202 aa).

Positions 90–154 (MRLDNIIFRL…SQSIIIKNLN (65 aa)) constitute an S4 RNA-binding domain.

It belongs to the universal ribosomal protein uS4 family. Part of the 30S ribosomal subunit. Contacts protein S5. The interaction surface between S4 and S5 is involved in control of translational fidelity.

It is found in the plastid. The protein localises to the chloroplast. Functionally, one of the primary rRNA binding proteins, it binds directly to 16S rRNA where it nucleates assembly of the body of the 30S subunit. With S5 and S12 plays an important role in translational accuracy. This Marchantia polymorpha (Common liverwort) protein is Small ribosomal subunit protein uS4c (rps4).